The following is a 280-amino-acid chain: 3-methyl-2-oxobutanoate hydroxymethyltransferase (280 aa).

Mg(2+) is bound by residues Asp61 and Asp100. 3-methyl-2-oxobutanoate is bound by residues 61 to 62 (DS), Asp100, and Lys130. Residue Glu132 participates in Mg(2+) binding. The active-site Proton acceptor is the Glu198.

Belongs to the PanB family. In terms of assembly, homodecamer; pentamer of dimers. It depends on Mg(2+) as a cofactor.

It localises to the cytoplasm. It catalyses the reaction 3-methyl-2-oxobutanoate + (6R)-5,10-methylene-5,6,7,8-tetrahydrofolate + H2O = 2-dehydropantoate + (6S)-5,6,7,8-tetrahydrofolate. It participates in cofactor biosynthesis; (R)-pantothenate biosynthesis; (R)-pantoate from 3-methyl-2-oxobutanoate: step 1/2. Its function is as follows. Catalyzes the reversible reaction in which hydroxymethyl group from 5,10-methylenetetrahydrofolate is transferred onto alpha-ketoisovalerate to form ketopantoate. The protein is 3-methyl-2-oxobutanoate hydroxymethyltransferase of Mycolicibacterium vanbaalenii (strain DSM 7251 / JCM 13017 / BCRC 16820 / KCTC 9966 / NRRL B-24157 / PYR-1) (Mycobacterium vanbaalenii).